The chain runs to 211 residues: Phosphoheptose isomerase (211 aa).

The SIS domain maps to 50-211; that stretch reads IAGTFEDGGK…VERMLGYCRL (162 aa). 65–67 is a substrate binding site; sequence NGG. The Zn(2+) site is built by H74 and E78. Residues E78, 109 to 110, 135 to 137, S140, and Q188 each bind substrate; these read ND and STS. Positions 188 and 196 each coordinate Zn(2+).

The protein belongs to the SIS family. GmhA subfamily. Zn(2+) serves as cofactor.

The protein localises to the cytoplasm. The catalysed reaction is 2 D-sedoheptulose 7-phosphate = D-glycero-alpha-D-manno-heptose 7-phosphate + D-glycero-beta-D-manno-heptose 7-phosphate. It participates in carbohydrate biosynthesis; D-glycero-D-manno-heptose 7-phosphate biosynthesis; D-glycero-alpha-D-manno-heptose 7-phosphate and D-glycero-beta-D-manno-heptose 7-phosphate from sedoheptulose 7-phosphate: step 1/1. Functionally, catalyzes the isomerization of sedoheptulose 7-phosphate in D-glycero-D-manno-heptose 7-phosphate. The protein is Phosphoheptose isomerase of Pelodictyon phaeoclathratiforme (strain DSM 5477 / BU-1).